The chain runs to 465 residues: Box C/D snoRNA protein 1 (465 aa).

Residues 1–72 are disordered; it reads MEFAAENEGK…GSRQRPEEIP (72 aa). At Ser-25 the chain carries Phosphoserine. Residues 56–70 are compositionally biased toward basic and acidic residues; that stretch reads EIGDGEEGSRQRPEE. Residues Lys-79, Lys-108, Lys-118, Lys-138, Lys-148, Lys-157, Lys-168, Lys-178, and Lys-195 each participate in a glycyl lysine isopeptide (Lys-Gly) (interchain with G-Cter in SUMO2) cross-link. Cys-215, Cys-218, Cys-227, Cys-230, Cys-235, Cys-239, His-243, and Cys-249 together coordinate Zn(2+). The HIT-type zinc-finger motif lies at 215-249; sequence CETCGTEEAKYRCPRCMRYSCSLPCVKKHKAELTC. Lys-454 participates in a covalent cross-link: Glycyl lysine isopeptide (Lys-Gly) (interchain with G-Cter in SUMO2).

Belongs to the BCD1 family. As to quaternary structure, interacts with FBL, SNU13, NOP58, NUFIP1, RUVBL1, RUVBL2 and TAF9. Interacts (via HIT-type zinc finger) with the RUVBL1/RUVBL2 complex in the presence of ADP.

Required for box C/D snoRNAs accumulation involved in snoRNA processing, snoRNA transport to the nucleolus and ribosome biogenesis. This chain is Box C/D snoRNA protein 1 (ZNHIT6), found in Pongo abelii (Sumatran orangutan).